A 267-amino-acid chain; its full sequence is MTYFEAFFLALLQGFTEFLPISSSAHLILPSEVLGWSDQGLAFDVAVHVGTLAAVVMYFRKEVVTLLSAWTFSIVKKEHNKESKLAWLIILSTIPAAVCGLMFKDFIEVYLRSAWVIAITTIVFGLLLWWVDKNSTLVKDEYEMTWKKALFLGIAQAAAMIPGTSRSGITITAALYLGFTREAAARFSFLMSIPIITLAGSYLGLKLALSDAIIHFGFLGTGIIVSFISAYICIHFFLKLISSMGMTPFVIYRLLLGTSLLAWLALT.

8 helical membrane passes run 1–21 (MTYF…FLPI), 39–59 (QGLA…VMYF), 87–107 (WLII…KDFI), 111–131 (LRSA…LWWV), 149–169 (ALFL…RSGI), 189–209 (FLMS…KLAL), 218–238 (FLGT…HFFL), and 246–266 (MTPF…WLAL).

The protein belongs to the UppP family.

It is found in the cell inner membrane. It catalyses the reaction di-trans,octa-cis-undecaprenyl diphosphate + H2O = di-trans,octa-cis-undecaprenyl phosphate + phosphate + H(+). Its function is as follows. Catalyzes the dephosphorylation of undecaprenyl diphosphate (UPP). Confers resistance to bacitracin. The sequence is that of Undecaprenyl-diphosphatase from Aliivibrio salmonicida (strain LFI1238) (Vibrio salmonicida (strain LFI1238)).